The chain runs to 484 residues: Hexokinase-2 (484 aa).

A Hexokinase domain is found at Pro-21 to Ala-467. The tract at residues Thr-75–Ile-208 is hexokinase small subdomain. The interval Asn-209–Asp-456 is hexokinase large subdomain.

It belongs to the hexokinase family. Monomer.

It localises to the cytoplasm. The enzyme catalyses a D-hexose + ATP = a D-hexose 6-phosphate + ADP + H(+). It carries out the reaction D-fructose + ATP = D-fructose 6-phosphate + ADP + H(+). The catalysed reaction is D-glucose + ATP = D-glucose 6-phosphate + ADP + H(+). It functions in the pathway carbohydrate metabolism; hexose metabolism. Its pathway is carbohydrate degradation; glycolysis; D-glyceraldehyde 3-phosphate and glycerone phosphate from D-glucose: step 1/4. Catalyzes the phosphorylation of hexose, such as D-glucose and D-fructose, to hexose 6-phosphate (D-glucose 6-phosphate and D-fructose 6-phosphate, respectively). Mediates the initial step of glycolysis by catalyzing phosphorylation of D-glucose to D-glucose 6-phosphate. This chain is Hexokinase-2 (HXK2), found in Candida albicans (strain SC5314 / ATCC MYA-2876) (Yeast).